The following is a 426-amino-acid chain: Colanic acid biosynthesis protein WcaK (426 aa).

The protein belongs to the polysaccharide pyruvyl transferase family.

It participates in slime biogenesis; slime polysaccharide biosynthesis. The sequence is that of Colanic acid biosynthesis protein WcaK (wcaK) from Escherichia coli (strain K12).